A 160-amino-acid chain; its full sequence is Putative pre-16S rRNA nuclease (160 aa).

It belongs to the YqgF nuclease family.

The protein localises to the cytoplasm. Functionally, could be a nuclease involved in processing of the 5'-end of pre-16S rRNA. The chain is Putative pre-16S rRNA nuclease from Cutibacterium acnes (strain DSM 16379 / KPA171202) (Propionibacterium acnes).